The chain runs to 139 residues: Ribosome-binding factor A (139 aa).

The segment at 120 to 139 (PENLLAVEDNTDEDDESFSE) is disordered. The span at 128-139 (DNTDEDDESFSE) shows a compositional bias: acidic residues.

It belongs to the RbfA family. In terms of assembly, monomer. Binds 30S ribosomal subunits, but not 50S ribosomal subunits or 70S ribosomes.

The protein localises to the cytoplasm. Functionally, one of several proteins that assist in the late maturation steps of the functional core of the 30S ribosomal subunit. Associates with free 30S ribosomal subunits (but not with 30S subunits that are part of 70S ribosomes or polysomes). Required for efficient processing of 16S rRNA. May interact with the 5'-terminal helix region of 16S rRNA. The protein is Ribosome-binding factor A of Nostoc punctiforme (strain ATCC 29133 / PCC 73102).